Here is a 193-residue protein sequence, read N- to C-terminus: Probable DNA-directed RNA polymerase subunit delta (193 aa).

Residues 14–81 (LALVEIATAI…GNNEWGLRAW (68 aa)) enclose the HTH HARE-type domain. Acidic residues-rich tracts occupy residues 119-174 (DDDV…DDNL) and 182-193 (DLDDLSDGDIEK). Positions 119–193 (DDDVIDYNDD…DDLSDGDIEK (75 aa)) are disordered.

The protein belongs to the RpoE family. In terms of assembly, RNAP is composed of a core of 2 alpha, a beta and a beta' subunits. The core is associated with a delta subunit and one of several sigma factors.

Its function is as follows. Participates in both the initiation and recycling phases of transcription. In the presence of the delta subunit, RNAP displays an increased specificity of transcription, a decreased affinity for nucleic acids, and an increased efficiency of RNA synthesis because of enhanced recycling. The protein is Probable DNA-directed RNA polymerase subunit delta of Leuconostoc citreum (strain KM20).